A 739-amino-acid chain; its full sequence is Bifunctional (p)ppGpp synthase/hydrolase RelA (739 aa).

The region spanning 50 to 149 (YIVHPIQVAG…VKLADRLHNM (100 aa)) is the HD domain. Mn(2+) contacts are provided by H53 and H77. Catalysis depends on nucleophile, for hydrolase activity residues E81 and D82. D144 is a binding site for Mn(2+). D264 is a binding site for Mg(2+). Residues 393–454 (ERIYVFTPTG…KTGDVVEIVT (62 aa)) form the TGS domain. The 76-residue stretch at 664–739 (EIDIYGLNRR…DVYSVKRTNG (76 aa)) folds into the ACT domain.

Belongs to the RelA/SpoT family. Mg(2+) serves as cofactor. The cofactor is Mn(2+).

It carries out the reaction GTP + ATP = guanosine 3'-diphosphate 5'-triphosphate + AMP. The enzyme catalyses guanosine 3',5'-bis(diphosphate) + H2O = GDP + diphosphate + H(+). It participates in purine metabolism; ppGpp biosynthesis; ppGpp from GDP: step 1/1. The protein operates within purine metabolism; ppGpp biosynthesis; ppGpp from GTP: step 1/2. Alpha-beta methylenyl ATP, an ATP-analog inhibitor of the synthase activity also reduces the hydrolase activity about 4-fold. Functionally, in eubacteria ppGpp (guanosine 3'-diphosphate 5'-diphosphate) is a mediator of the stringent response that coordinates a variety of cellular activities in response to changes in nutritional abundance. This enzyme catalyzes both the formation of pppGpp which is then hydrolyzed to form ppGpp, and the hydrolysis of ppGpp. The enzyme does not simultaneously display both synthase and hydrolase activities. In the structure of residues 1-385 there are 2 conformations seen, the hydrolase-OFF/synthase-ON and hydrolase-ON/synthase-OFF, suggesting there is ligand-induced signal transmission between the 2 active sites. This Streptococcus dysgalactiae subsp. equisimilis (Streptococcus equisimilis) protein is Bifunctional (p)ppGpp synthase/hydrolase RelA (relA).